Consider the following 1336-residue polypeptide: Probable ATP-dependent DNA helicase HFM1 (1336 aa).

A Helicase ATP-binding domain is found at 159–347 (EHLLYSDRNF…WLSDENSPGV (189 aa)). 172–179 (APTGSGKT) is an ATP binding site. The DEAH box motif lies at 280–283 (DEVH). The region spanning 388–589 (NIIQTYSDGR…DVKVALEWIR (202 aa)) is the Helicase C-terminal domain. In terms of domain architecture, SEC63 spans 646-961 (PTETGKLMAL…GLDIQQSFNI (316 aa)). Residues 1016–1031 (CNHNCKNKDACGHECC) form a C4-type zinc finger.

It belongs to the helicase family. SKI2 subfamily. The cofactor is Zn(2+).

It catalyses the reaction Couples ATP hydrolysis with the unwinding of duplex DNA by translocating in the 3'-5' direction.. It carries out the reaction ATP + H2O = ADP + phosphate + H(+). Functionally, required for crossover formation and complete synapsis of homologous chromosomes during meiosis. This Xenopus tropicalis (Western clawed frog) protein is Probable ATP-dependent DNA helicase HFM1 (hfm1).